Here is a 238-residue protein sequence, read N- to C-terminus: Trypsin-3 (238 aa).

A signal peptide spans 1–7 (FAVAFAA). A propeptide spans 8 to 15 (PIDDEDDK) (activation peptide). A Peptidase S1 domain is found at 16 to 236 (IVGGYECRKN…YRSWISSTMS (221 aa)). Intrachain disulfides connect cysteine 22–cysteine 152, cysteine 40–cysteine 56, cysteine 124–cysteine 225, cysteine 131–cysteine 198, cysteine 163–cysteine 177, and cysteine 188–cysteine 212. Residue histidine 55 is the Charge relay system of the active site. Ca(2+) is bound by residues glutamate 67, asparagine 69, valine 72, and glutamate 77. The active-site Charge relay system is the aspartate 99. The active-site Charge relay system is the serine 192.

The protein belongs to the peptidase S1 family. Ca(2+) is required as a cofactor.

It is found in the secreted. It localises to the extracellular space. The catalysed reaction is Preferential cleavage: Arg-|-Xaa, Lys-|-Xaa.. The polypeptide is Trypsin-3 (Salmo salar (Atlantic salmon)).